The sequence spans 342 residues: MNKRIAIVLFNLGGPEDIEYVKPFLFNLFYDKAIINLPNPLRYIIAKIISITREKKSQKIYSLIGSKSYLIQETEKQKLAITEKLKEFIKEDFIIFINMRYSTPFAKEVIGQIKEYNPSEIILLPLYPQFSSTTTGSSVKNFLQNIDIDIPIKTICCYPIEEDFIKAHVSIIKEKLYDKNFRILFSAHGLPKRIIKAGDPYSFQIKETVNKIVKELNIKDLDYKITYQSRVGPIEWLKPNTEDEIELAGKLKKDIIIVPISFVSEHVETLVELDIEYKLIADKYKIQYTRIPTLGTNKIFINSLTNILLRFINNTNTNLVMSSSSKRICPNKFTKCLCNLTN.

The Fe cation site is built by histidine 188 and glutamate 268.

Belongs to the ferrochelatase family.

Its subcellular location is the cytoplasm. The enzyme catalyses heme b + 2 H(+) = protoporphyrin IX + Fe(2+). Its pathway is porphyrin-containing compound metabolism; protoheme biosynthesis; protoheme from protoporphyrin-IX: step 1/1. Catalyzes the ferrous insertion into protoporphyrin IX. The protein is Ferrochelatase of Rickettsia prowazekii (strain Madrid E).